We begin with the raw amino-acid sequence, 352 residues long: Phenylalanine--tRNA ligase alpha subunit (352 aa).

Residue Glu-258 coordinates Mg(2+).

It belongs to the class-II aminoacyl-tRNA synthetase family. Phe-tRNA synthetase alpha subunit type 1 subfamily. As to quaternary structure, tetramer of two alpha and two beta subunits. Requires Mg(2+) as cofactor.

Its subcellular location is the cytoplasm. It catalyses the reaction tRNA(Phe) + L-phenylalanine + ATP = L-phenylalanyl-tRNA(Phe) + AMP + diphosphate + H(+). This Staphylococcus haemolyticus (strain JCSC1435) protein is Phenylalanine--tRNA ligase alpha subunit.